Consider the following 308-residue polypeptide: Ornithine carbamoyltransferase (308 aa).

Carbamoyl phosphate contacts are provided by residues 56 to 59 (STRT), Gln-83, Arg-107, and 134 to 137 (HPCQ). L-ornithine-binding positions include Asn-165, Asp-225, and 229-230 (SM). Residues 266-267 (CL) and Arg-294 each bind carbamoyl phosphate.

It belongs to the aspartate/ornithine carbamoyltransferase superfamily. OTCase family.

The protein resides in the cytoplasm. It carries out the reaction carbamoyl phosphate + L-ornithine = L-citrulline + phosphate + H(+). It participates in amino-acid biosynthesis; L-arginine biosynthesis; L-arginine from L-ornithine and carbamoyl phosphate: step 1/3. In terms of biological role, reversibly catalyzes the transfer of the carbamoyl group from carbamoyl phosphate (CP) to the N(epsilon) atom of ornithine (ORN) to produce L-citrulline. This chain is Ornithine carbamoyltransferase, found in Cereibacter sphaeroides (strain ATCC 17029 / ATH 2.4.9) (Rhodobacter sphaeroides).